The chain runs to 120 residues: Large ribosomal subunit protein bL20c (120 aa).

The protein belongs to the bacterial ribosomal protein bL20 family.

The protein resides in the plastid. Functionally, binds directly to 23S ribosomal RNA and is necessary for the in vitro assembly process of the 50S ribosomal subunit. It is not involved in the protein synthesizing functions of that subunit. In Cuscuta obtusiflora (Peruvian dodder), this protein is Large ribosomal subunit protein bL20c.